An 865-amino-acid chain; its full sequence is Alanine--tRNA ligase (865 aa).

Zn(2+) is bound by residues H554, H558, C656, and H660.

This sequence belongs to the class-II aminoacyl-tRNA synthetase family. Zn(2+) is required as a cofactor.

The protein resides in the cytoplasm. It carries out the reaction tRNA(Ala) + L-alanine + ATP = L-alanyl-tRNA(Ala) + AMP + diphosphate. Functionally, catalyzes the attachment of alanine to tRNA(Ala) in a two-step reaction: alanine is first activated by ATP to form Ala-AMP and then transferred to the acceptor end of tRNA(Ala). Also edits incorrectly charged Ser-tRNA(Ala) and Gly-tRNA(Ala) via its editing domain. This is Alanine--tRNA ligase from Francisella tularensis subsp. tularensis (strain WY96-3418).